The chain runs to 323 residues: Aspartate carbamoyltransferase catalytic subunit (323 aa).

Carbamoyl phosphate-binding residues include arginine 71 and threonine 72. Lysine 99 contributes to the L-aspartate binding site. Positions 121, 151, and 154 each coordinate carbamoyl phosphate. Residues arginine 184 and arginine 239 each coordinate L-aspartate. Carbamoyl phosphate contacts are provided by glycine 280 and proline 281.

The protein belongs to the aspartate/ornithine carbamoyltransferase superfamily. ATCase family. In terms of assembly, heterododecamer (2C3:3R2) of six catalytic PyrB chains organized as two trimers (C3), and six regulatory PyrI chains organized as three dimers (R2).

The catalysed reaction is carbamoyl phosphate + L-aspartate = N-carbamoyl-L-aspartate + phosphate + H(+). It functions in the pathway pyrimidine metabolism; UMP biosynthesis via de novo pathway; (S)-dihydroorotate from bicarbonate: step 2/3. In terms of biological role, catalyzes the condensation of carbamoyl phosphate and aspartate to form carbamoyl aspartate and inorganic phosphate, the committed step in the de novo pyrimidine nucleotide biosynthesis pathway. The polypeptide is Aspartate carbamoyltransferase catalytic subunit (Ralstonia nicotianae (strain ATCC BAA-1114 / GMI1000) (Ralstonia solanacearum)).